Consider the following 155-residue polypeptide: Small ribosomal subunit protein uS7c (155 aa).

This sequence belongs to the universal ribosomal protein uS7 family. In terms of assembly, part of the 30S ribosomal subunit.

The protein localises to the plastid. It localises to the chloroplast. Its function is as follows. One of the primary rRNA binding proteins, it binds directly to 16S rRNA where it nucleates assembly of the head domain of the 30S subunit. The protein is Small ribosomal subunit protein uS7c (rps7) of Sagittaria latifolia (Broadleaf arrowhead).